The following is a 1096-amino-acid chain: DNA-directed RNA polymerase subunit beta (1096 aa).

This sequence belongs to the RNA polymerase beta chain family. As to quaternary structure, in plastids the minimal PEP RNA polymerase catalytic core is composed of four subunits: alpha, beta, beta', and beta''. When a (nuclear-encoded) sigma factor is associated with the core the holoenzyme is formed, which can initiate transcription.

It localises to the plastid. The protein localises to the chloroplast. It catalyses the reaction RNA(n) + a ribonucleoside 5'-triphosphate = RNA(n+1) + diphosphate. Functionally, DNA-dependent RNA polymerase catalyzes the transcription of DNA into RNA using the four ribonucleoside triphosphates as substrates. This chain is DNA-directed RNA polymerase subunit beta, found in Guillardia theta (Cryptophyte).